A 330-amino-acid polypeptide reads, in one-letter code: Tetraacyldisaccharide 4'-kinase (330 aa).

Residue 58–65 (TVGGSGKT) coordinates ATP.

The protein belongs to the LpxK family.

The catalysed reaction is a lipid A disaccharide + ATP = a lipid IVA + ADP + H(+). Its pathway is glycolipid biosynthesis; lipid IV(A) biosynthesis; lipid IV(A) from (3R)-3-hydroxytetradecanoyl-[acyl-carrier-protein] and UDP-N-acetyl-alpha-D-glucosamine: step 6/6. In terms of biological role, transfers the gamma-phosphate of ATP to the 4'-position of a tetraacyldisaccharide 1-phosphate intermediate (termed DS-1-P) to form tetraacyldisaccharide 1,4'-bis-phosphate (lipid IVA). In Shewanella halifaxensis (strain HAW-EB4), this protein is Tetraacyldisaccharide 4'-kinase.